Reading from the N-terminus, the 292-residue chain is 1D-myo-inositol 2-acetamido-2-deoxy-alpha-D-glucopyranoside deacetylase (292 aa).

Zn(2+) is bound by residues His11, Asp14, and His146.

This sequence belongs to the MshB deacetylase family. Requires Zn(2+) as cofactor.

It catalyses the reaction 1D-myo-inositol 2-acetamido-2-deoxy-alpha-D-glucopyranoside + H2O = 1D-myo-inositol 2-amino-2-deoxy-alpha-D-glucopyranoside + acetate. Catalyzes the deacetylation of 1D-myo-inositol 2-acetamido-2-deoxy-alpha-D-glucopyranoside (GlcNAc-Ins) in the mycothiol biosynthesis pathway. This Acidothermus cellulolyticus (strain ATCC 43068 / DSM 8971 / 11B) protein is 1D-myo-inositol 2-acetamido-2-deoxy-alpha-D-glucopyranoside deacetylase.